Here is a 128-residue protein sequence, read N- to C-terminus: Lysozyme C-1 (128 aa).

Residues 1–128 (KVYDRCEFAR…VSQYIRGCKL (128 aa)) enclose the C-type lysozyme domain. Disulfide bonds link Cys-6-Cys-126, Cys-30-Cys-114, Cys-63-Cys-79, and Cys-75-Cys-93. Catalysis depends on residues Glu-35 and Asp-51.

The protein belongs to the glycosyl hydrolase 22 family. As to quaternary structure, monomer.

Its subcellular location is the secreted. It catalyses the reaction Hydrolysis of (1-&gt;4)-beta-linkages between N-acetylmuramic acid and N-acetyl-D-glucosamine residues in a peptidoglycan and between N-acetyl-D-glucosamine residues in chitodextrins.. Lysozymes have primarily a bacteriolytic function; those in tissues and body fluids are associated with the monocyte-macrophage system and enhance the activity of immunoagents. The sequence is that of Lysozyme C-1 from Sus scrofa (Pig).